Consider the following 125-residue polypeptide: C-X-C motif chemokine 9 (125 aa).

A signal peptide spans 1-22; that stretch reads MKKSGVLFLLGIILLVLIGVQG. 2 disulfides stabilise this stretch: C31–C58 and C33–C74. A disordered region spans residues 93–125; sequence VSQKKKQKNGKKHQKKKVLKVRKSQRSRQKKTT. Over residues 94–125 the composition is skewed to basic residues; it reads SQKKKQKNGKKHQKKKVLKVRKSQRSRQKKTT.

This sequence belongs to the intercrine alpha (chemokine CxC) family.

The protein resides in the secreted. In terms of biological role, cytokine that affects the growth, movement, or activation state of cells that participate in immune and inflammatory response. Chemotactic for activated T-cells. Binds to CXCR3. This Homo sapiens (Human) protein is C-X-C motif chemokine 9 (CXCL9).